The sequence spans 406 residues: Beta-galactoside alpha-2,6-sialyltransferase 1 (406 aa).

Over 1–9 (MIHTNLKKK) the chain is Cytoplasmic. Residues 10–26 (FSCCVLVFLLFAVICVW) form a helical; Signal-anchor for type II membrane protein membrane-spanning segment. Topologically, residues 27–406 (KEKKKGSYYD…TLPGFRTIHC (380 aa)) are lumenal. 3 cysteine pairs are disulfide-bonded: cysteine 142–cysteine 406, cysteine 184–cysteine 335, and cysteine 353–cysteine 364. Residues asparagine 149 and asparagine 161 are each glycosylated (N-linked (GlcNAc...) asparagine). Substrate contacts are provided by residues serine 189, asparagine 212, asparagine 233, 322-324 (SSG), cysteine 353, tyrosine 354, threonine 365, tyrosine 369, histidine 370, and lysine 376. A Phosphotyrosine modification is found at tyrosine 369.

Belongs to the glycosyltransferase 29 family. As to quaternary structure, monomer and homodimer. N-glycosylated.

The protein resides in the golgi apparatus. It localises to the golgi stack membrane. The protein localises to the secreted. It carries out the reaction a beta-D-galactoside + CMP-N-acetyl-beta-neuraminate = an N-acetyl-alpha-neuraminyl-(2-&gt;6)-beta-D-galactosyl derivative + CMP + H(+). The protein operates within protein modification; protein glycosylation. With respect to regulation, inhibited by CTP. In terms of biological role, transfers sialic acid from CMP-sialic acid to galactose-containing acceptor substrates. In B lymphocytes, generates neuraminidase-sensitive lymphocyte cell-surface differentiation antigens, such as CDw75, HB-6 and CD76. In Homo sapiens (Human), this protein is Beta-galactoside alpha-2,6-sialyltransferase 1 (ST6GAL1).